The sequence spans 299 residues: MLRLFYFSAIIASVILNFVGIIMNLFITVVNCKTWVKSHRISSSDRILFSLGITRFLMLGLFLVNTIYFVSSNTERSVYLSAFFVLCFMFLDSSSLWFVTLLNILYCVKITNFQHSVFLLLKRNISPKIPRLLLACVLISAFTTCLYITLSQASPFPELVTTRNNTSFNINEGILSLVVSLVLSSSLQFIINVTSASLLIHSLRRHIQKMQKNATGFWNPQTEAHVGAMKLMVYFLILYIPYSVATLVQYLPFYAGMDMGTKSICLIFATLYSPGHSVLIIITHPKLKTTAKKILCFKK.

The Extracellular segment spans residues 1–9; sequence MLRLFYFSA. The chain crosses the membrane as a helical span at residues 10 to 30; it reads IIASVILNFVGIIMNLFITVV. Residues 31 to 46 are Cytoplasmic-facing; that stretch reads NCKTWVKSHRISSSDR. Residues 47–67 traverse the membrane as a helical segment; it reads ILFSLGITRFLMLGLFLVNTI. Residues 68–81 are Extracellular-facing; it reads YFVSSNTERSVYLS. A helical membrane pass occupies residues 82–102; sequence AFFVLCFMFLDSSSLWFVTLL. Over 103-131 the chain is Cytoplasmic; the sequence is NILYCVKITNFQHSVFLLLKRNISPKIPR. Residues 132 to 152 form a helical membrane-spanning segment; sequence LLLACVLISAFTTCLYITLSQ. The Extracellular portion of the chain corresponds to 153–172; it reads ASPFPELVTTRNNTSFNINE. Residues Asn-164 and Asn-165 are each glycosylated (N-linked (GlcNAc...) asparagine). Residues 173-193 form a helical membrane-spanning segment; sequence GILSLVVSLVLSSSLQFIINV. Over 194–230 the chain is Cytoplasmic; sequence TSASLLIHSLRRHIQKMQKNATGFWNPQTEAHVGAMK. Residues 231–251 traverse the membrane as a helical segment; the sequence is LMVYFLILYIPYSVATLVQYL. Residues 252–262 are Extracellular-facing; it reads PFYAGMDMGTK. A helical membrane pass occupies residues 263 to 283; that stretch reads SICLIFATLYSPGHSVLIIIT. Residues 284–299 lie on the Cytoplasmic side of the membrane; the sequence is HPKLKTTAKKILCFKK.

Belongs to the G-protein coupled receptor T2R family.

It localises to the membrane. It is found in the cell projection. The protein resides in the cilium membrane. In terms of biological role, gustducin-coupled receptor implicated in the perception of bitter compounds in the oral cavity and the gastrointestinal tract. Signals through PLCB2 and the calcium-regulated cation channel TRPM5. In airway epithelial cells, binding of denatonium increases the intracellular calcium ion concentration and stimulates ciliary beat frequency. This Pan paniscus (Pygmy chimpanzee) protein is Taste receptor type 2 member 4 (TAS2R4).